Here is a 332-residue protein sequence, read N- to C-terminus: Glycerol-3-phosphate dehydrogenase [NAD(P)+] (332 aa).

3 residues coordinate NADPH: Trp-11, Arg-30, and Lys-108. Sn-glycerol 3-phosphate-binding residues include Lys-108, Gly-137, and Ser-139. Ala-141 serves as a coordination point for NADPH. Sn-glycerol 3-phosphate is bound by residues Lys-192, Asp-245, Ser-255, Arg-256, and Asn-257. The active-site Proton acceptor is Lys-192. An NADPH-binding site is contributed by Arg-256. Positions 280 and 282 each coordinate NADPH.

This sequence belongs to the NAD-dependent glycerol-3-phosphate dehydrogenase family.

The protein resides in the cytoplasm. The enzyme catalyses sn-glycerol 3-phosphate + NAD(+) = dihydroxyacetone phosphate + NADH + H(+). The catalysed reaction is sn-glycerol 3-phosphate + NADP(+) = dihydroxyacetone phosphate + NADPH + H(+). The protein operates within membrane lipid metabolism; glycerophospholipid metabolism. Catalyzes the reduction of the glycolytic intermediate dihydroxyacetone phosphate (DHAP) to sn-glycerol 3-phosphate (G3P), the key precursor for phospholipid synthesis. The sequence is that of Glycerol-3-phosphate dehydrogenase [NAD(P)+] from Burkholderia pseudomallei (strain 1710b).